A 225-amino-acid chain; its full sequence is Leucyl/phenylalanyl-tRNA--protein transferase (225 aa).

It belongs to the L/F-transferase family.

The protein resides in the cytoplasm. It catalyses the reaction N-terminal L-lysyl-[protein] + L-leucyl-tRNA(Leu) = N-terminal L-leucyl-L-lysyl-[protein] + tRNA(Leu) + H(+). The enzyme catalyses N-terminal L-arginyl-[protein] + L-leucyl-tRNA(Leu) = N-terminal L-leucyl-L-arginyl-[protein] + tRNA(Leu) + H(+). The catalysed reaction is L-phenylalanyl-tRNA(Phe) + an N-terminal L-alpha-aminoacyl-[protein] = an N-terminal L-phenylalanyl-L-alpha-aminoacyl-[protein] + tRNA(Phe). Functions in the N-end rule pathway of protein degradation where it conjugates Leu, Phe and, less efficiently, Met from aminoacyl-tRNAs to the N-termini of proteins containing an N-terminal arginine or lysine. This Nitrobacter winogradskyi (strain ATCC 25391 / DSM 10237 / CIP 104748 / NCIMB 11846 / Nb-255) protein is Leucyl/phenylalanyl-tRNA--protein transferase.